Consider the following 138-residue polypeptide: Small ribosomal subunit protein uS11 (138 aa).

Disordered regions lie at residues 1–29 and 117–138; these read MPPK…PHGA and GAIS…RRRV. Basic residues predominate over residues 13–22; that stretch reads KGQKTRRREK.

This sequence belongs to the universal ribosomal protein uS11 family. In terms of assembly, part of the 30S ribosomal subunit. Interacts with proteins S7 and S18. Binds to IF-3.

Located on the platform of the 30S subunit, it bridges several disparate RNA helices of the 16S rRNA. Forms part of the Shine-Dalgarno cleft in the 70S ribosome. The polypeptide is Small ribosomal subunit protein uS11 (Mycobacterium ulcerans (strain Agy99)).